The following is a 317-amino-acid chain: MNPQLTPDGRLRHLLTLDGLPRATLTHILDTAESFMDVGEREVKKVPLLRGKSIFNLFFEPSTRTRTTFEIAAKRLSADVVNLNIATSSQTKGEAILDTVDNLSAMHADMFIVRHSQSGAAHFIARHVAPHISVVNAGDGRHAHPTQGLLDMFTIRRFKGEFHNLTVAIVGDVLHSRVARSQIHALTTLGVPEVRVIGPKTLLPTGVEQLGVKVFHDMAAGLAGCDVVIMLRLQNERMKGARLPSAQEYFKFFGLTPEKLALAKPDAIVMHPGPMNRGVEIASEVADGPQSVILPQVTYGIAVRMAVMALLAGGAST.

Positions 64 and 65 each coordinate carbamoyl phosphate. Lysine 92 is an L-aspartate binding site. 3 residues coordinate carbamoyl phosphate: arginine 114, histidine 144, and glutamine 147. 2 residues coordinate L-aspartate: arginine 177 and arginine 232. Carbamoyl phosphate-binding residues include glycine 273 and proline 274.

It belongs to the aspartate/ornithine carbamoyltransferase superfamily. ATCase family. As to quaternary structure, heterododecamer (2C3:3R2) of six catalytic PyrB chains organized as two trimers (C3), and six regulatory PyrI chains organized as three dimers (R2).

It catalyses the reaction carbamoyl phosphate + L-aspartate = N-carbamoyl-L-aspartate + phosphate + H(+). It participates in pyrimidine metabolism; UMP biosynthesis via de novo pathway; (S)-dihydroorotate from bicarbonate: step 2/3. Catalyzes the condensation of carbamoyl phosphate and aspartate to form carbamoyl aspartate and inorganic phosphate, the committed step in the de novo pyrimidine nucleotide biosynthesis pathway. The protein is Aspartate carbamoyltransferase catalytic subunit of Thiobacillus denitrificans (strain ATCC 25259 / T1).